The following is a 139-amino-acid chain: Large ribosomal subunit protein bL21 (139 aa).

Belongs to the bacterial ribosomal protein bL21 family. As to quaternary structure, part of the 50S ribosomal subunit. Contacts protein L20.

Functionally, this protein binds to 23S rRNA in the presence of protein L20. The polypeptide is Large ribosomal subunit protein bL21 (Prochlorococcus marinus (strain NATL1A)).